The following is a 530-amino-acid chain: Glucocorticoid modulatory element-binding protein 2 (530 aa).

The 83-residue stretch at 81–163 (EEGENLEAEI…RKIMDSGELD (83 aa)) folds into the SAND domain. Position 110 (Cys110) interacts with Zn(2+). Residues Lys136, Lys140, Lys143, and Arg154 each contribute to the DNA site. Lys155 is covalently cross-linked (Glycyl lysine isopeptide (Lys-Gly) (interchain with G-Cter in SUMO1); alternate). A Glycyl lysine isopeptide (Lys-Gly) (interchain with G-Cter in SUMO2); alternate cross-link involves residue Lys155. Residues His167, Cys171, and Cys175 each contribute to the Zn(2+) site. Positions 304 to 348 (QMDRSREQYARDLAALEQQCDEHRRRAKELKHKSQHLSNVLMTLT) form a coiled coil. Ser373 bears the Phosphoserine mark.

As to quaternary structure, homodimer, and heterodimer of GMEB1 and GMEB2. GMEB1 and GMEB2 form the parvovirus initiator complex (PIF). Interacts with the glucocorticoid receptor (NR3C1). May interact with CREB-binding protein (CBP). In terms of tissue distribution, expressed in peripheral blood lymphocytes and fetal liver. Expressed preferentially in reproductive and/or developmentally important cells, such as testis, placenta, bone marrow and fetal tissues.

It localises to the nucleus. It is found in the cytoplasm. Trans-acting factor that binds to glucocorticoid modulatory elements (GME) present in the TAT (tyrosine aminotransferase) promoter and increases sensitivity to low concentrations of glucocorticoids. Also binds to the transferrin receptor promoter. Essential auxiliary factor for the replication of parvoviruses. The polypeptide is Glucocorticoid modulatory element-binding protein 2 (GMEB2) (Homo sapiens (Human)).